A 487-amino-acid chain; its full sequence is MNKEIFNSKLFEKLDKDNLIENSREWSNEIDSTWNYNDVVGILKSWESLNTISLEYIDSIVNCLTETGKDILINGSPEAKLYNILTEQGMSPADANKQFGATAFGSAKNKGWIEVKAGKIFKKVESINDIVKSDLSIPDLSKLDSKTLEQYKKSRFIEEKKLSYYRVTKGEQYNKRSKELSDLTIEMLKDDSWEKESFKVNINAMGVVPEQGYRHPLNKVKNEFKQIFLDMGFEEMPTFNFVENGFWNFDALFQPQQHPARELQDTFFIKDPKTSHDFSDEYCERVKQVHSVGGYGSLGWIYDWKLEEAEKNILRTHTTAVSARMLYKLAQNGFKPKKYFSIDRVFRNETLDATHLAEFHQVEGVIADVDISLGHLIGVISEFFKRLGIDNVRFKPAFNPYTEPSMEIFGYHPILKRWVELGNSGIFRPELLLPMGIPENVRVAAWGLSLERPTMIKYGLDNIRAIFGNSINVNFIKNNPICMFESK.

Residues threonine 319, 361–363 (QVE), and tyrosine 401 contribute to the L-phenylalanine site. A Mg(2+)-binding site is contributed by glutamate 403. Residue phenylalanine 427 participates in L-phenylalanine binding.

This sequence belongs to the class-II aminoacyl-tRNA synthetase family. Phe-tRNA synthetase alpha subunit type 2 subfamily. In terms of assembly, tetramer of two alpha and two beta subunits. Requires Mg(2+) as cofactor.

Its subcellular location is the cytoplasm. It catalyses the reaction tRNA(Phe) + L-phenylalanine + ATP = L-phenylalanyl-tRNA(Phe) + AMP + diphosphate + H(+). The polypeptide is Phenylalanine--tRNA ligase alpha subunit (phesA) (Dictyostelium discoideum (Social amoeba)).